A 225-amino-acid polypeptide reads, in one-letter code: Ribonuclease 3 (225 aa).

Residues 7 to 129 (IPRLCRTLGY…IIGAVYLDSD (123 aa)) form the RNase III domain. Mg(2+) is bound at residue E42. D46 is a catalytic residue. Mg(2+) is bound by residues D115 and E118. E118 is a catalytic residue. The region spanning 155-225 (DPKTLLQELL…AAQALELIKR (71 aa)) is the DRBM domain.

This sequence belongs to the ribonuclease III family. As to quaternary structure, homodimer. Requires Mg(2+) as cofactor.

The protein localises to the cytoplasm. The catalysed reaction is Endonucleolytic cleavage to 5'-phosphomonoester.. Functionally, digests double-stranded RNA. Involved in the processing of primary rRNA transcript to yield the immediate precursors to the large and small rRNAs (23S and 16S). Processes some mRNAs, and tRNAs when they are encoded in the rRNA operon. Processes pre-crRNA and tracrRNA of type II CRISPR loci if present in the organism. This Shewanella woodyi (strain ATCC 51908 / MS32) protein is Ribonuclease 3.